A 509-amino-acid chain; its full sequence is Maturase K (509 aa).

It belongs to the intron maturase 2 family. MatK subfamily.

Its subcellular location is the plastid. It is found in the chloroplast. Functionally, usually encoded in the trnK tRNA gene intron. Probably assists in splicing its own and other chloroplast group II introns. In Clematis lasiantha (Pipestem clematis), this protein is Maturase K.